The primary structure comprises 492 residues: 3-octaprenyl-4-hydroxybenzoate carboxy-lyase (492 aa).

Mn(2+) is bound at residue N177. Residues 180-182, 194-196, and 199-200 contribute to the prenylated FMN site; these read IYR, RWL, and RG. Residue E243 participates in Mn(2+) binding. Catalysis depends on D292, which acts as the Proton donor.

This sequence belongs to the UbiD family. Homohexamer. Requires prenylated FMN as cofactor. Mn(2+) is required as a cofactor.

The protein resides in the cell membrane. It catalyses the reaction a 4-hydroxy-3-(all-trans-polyprenyl)benzoate + H(+) = a 2-(all-trans-polyprenyl)phenol + CO2. The protein operates within cofactor biosynthesis; ubiquinone biosynthesis. In terms of biological role, catalyzes the decarboxylation of 3-octaprenyl-4-hydroxy benzoate to 2-octaprenylphenol, an intermediate step in ubiquinone biosynthesis. This chain is 3-octaprenyl-4-hydroxybenzoate carboxy-lyase, found in Neisseria meningitidis serogroup A / serotype 4A (strain DSM 15465 / Z2491).